A 587-amino-acid chain; its full sequence is Arginine--tRNA ligase (587 aa).

The short motif at 126–136 is the 'HIGH' region element; that stretch reads ANPTGPLHVGH.

It belongs to the class-I aminoacyl-tRNA synthetase family. As to quaternary structure, monomer.

It is found in the cytoplasm. The catalysed reaction is tRNA(Arg) + L-arginine + ATP = L-arginyl-tRNA(Arg) + AMP + diphosphate. This Aromatoleum aromaticum (strain DSM 19018 / LMG 30748 / EbN1) (Azoarcus sp. (strain EbN1)) protein is Arginine--tRNA ligase.